The following is a 200-amino-acid chain: Serine/threonine-protein kinase mos (200 aa).

Positions 2-200 (LCLLQPLGSG…ELLKGERVTA (199 aa)) constitute a Protein kinase domain. Residues 8-16 (LGSGGFGSV) and K29 each bind ATP. D143 functions as the Proton acceptor in the catalytic mechanism.

It belongs to the protein kinase superfamily. Ser/Thr protein kinase family.

The catalysed reaction is L-seryl-[protein] + ATP = O-phospho-L-seryl-[protein] + ADP + H(+). The enzyme catalyses L-threonyl-[protein] + ATP = O-phospho-L-threonyl-[protein] + ADP + H(+). The sequence is that of Serine/threonine-protein kinase mos (MOS) from Apteryx australis (Southern brown kiwi).